A 226-amino-acid polypeptide reads, in one-letter code: Ribonuclease 3 (226 aa).

An RNase III domain is found at 6 to 128; that stretch reads INRLQRKLGY…LIGGVFLDSD (123 aa). Position 41 (E41) interacts with Mg(2+). Residue D45 is part of the active site. D114 and E117 together coordinate Mg(2+). E117 is a catalytic residue. A DRBM domain is found at 155–225; the sequence is DPKTRLQEYL…AEQALKQLEL (71 aa).

The protein belongs to the ribonuclease III family. In terms of assembly, homodimer. It depends on Mg(2+) as a cofactor.

The protein localises to the cytoplasm. The enzyme catalyses Endonucleolytic cleavage to 5'-phosphomonoester.. Functionally, digests double-stranded RNA. Involved in the processing of primary rRNA transcript to yield the immediate precursors to the large and small rRNAs (23S and 16S). Processes some mRNAs, and tRNAs when they are encoded in the rRNA operon. Processes pre-crRNA and tracrRNA of type II CRISPR loci if present in the organism. This is Ribonuclease 3 from Yersinia pseudotuberculosis serotype O:1b (strain IP 31758).